The following is a 181-amino-acid chain: ADP-ribosylation factor 1 (181 aa).

Gly-2 carries N-myristoyl glycine lipidation. Residues 24–31 (GLDAAGKT), 126–129 (NKQD), and Ala-160 each bind GTP.

Belongs to the small GTPase superfamily. Arf family. In terms of assembly, may interact with GTPase RAB5b.

Its subcellular location is the golgi apparatus membrane. It carries out the reaction GTP + H2O = GDP + phosphate + H(+). Alternates between an inactive GDP-bound form and an active GTP-bound form. Intrinsic GTPase activity is almost undetectable in vitro. Activated by a guanine nucleotide-exchange factor (GEF) and inactivated by GTPase-activating protein ARFGAP1. Functionally, small GTPase involved in protein trafficking between different compartments. Modulates vesicle budding and uncoating within the Golgi complex. In its GTP-bound form, triggers the recruitment of coatomer proteins to the Golgi membrane. The hydrolysis of ARF1-bound GTP, which is mediated by ARFGAPs proteins, is required for dissociation of coat proteins from Golgi membranes and vesicles. Regulates the transport of N-acylated AK2 to the parasitophorous vacuole membrane. May be involved in the activation of lipid kinase PIP5K. This Plasmodium falciparum (isolate NF54) protein is ADP-ribosylation factor 1 (ARF1).